The chain runs to 537 residues: DNA-directed primase/polymerase protein (537 aa).

Residues 1–22 (MLRKWEARVKQIEERASHYERK) adopt a coiled-coil conformation. Residues Arg76, 114–116 (DLE), 165–169 (KFSRH), 270–273 (RNFR), and Lys279 contribute to the substrate site. Mn(2+) contacts are provided by Asp114 and Glu116. The Zn(2+) site is built by Cys401, His408, Cys428, and Cys433. The short motif at 401-434 (CENIGRAHKSNNIMILVDLKNEVWYQKCHDPVCK) is the Zinc knuckle motif element. The tract at residues 462–481 (SGETDDTSTSLTKDSQTPPS) is disordered. The segment at 462 to 536 (SGETDDTSTS…DELIIEALQN (75 aa)) is interaction with RPA1. A compositionally biased stretch (low complexity) spans 468–478 (TSTSLTKDSQT). Short sequence motifs (RPA1-binding motif) lie at residues 494–507 (WDDE…EATE) and 524–532 (DIPDELIIE).

The protein belongs to the eukaryotic-type primase small subunit family. In terms of assembly, interacts with RPA1; leading to recruitment to chromatin and stimulate DNA primase activity. Interacts with SSBP1. Interacts with POLDIP2; leading to enhance DNA polymerase activity. The cofactor is Mn(2+).

It localises to the nucleus. The protein resides in the mitochondrion matrix. It is found in the chromosome. The enzyme catalyses ssDNA + n NTP = ssDNA/pppN(pN)n-1 hybrid + (n-1) diphosphate.. The catalysed reaction is DNA(n) + a 2'-deoxyribonucleoside 5'-triphosphate = DNA(n+1) + diphosphate. In terms of biological role, DNA primase and DNA polymerase required to tolerate replication-stalling lesions by bypassing them. Required to facilitate mitochondrial and nuclear replication fork progression by initiating de novo DNA synthesis using dNTPs and acting as an error-prone DNA polymerase able to bypass certain DNA lesions. Shows a high capacity to tolerate DNA damage lesions such as 8oxoG and abasic sites in DNA. Provides different translesion synthesis alternatives when DNA replication is stalled: able to synthesize DNA primers downstream of lesions, such as ultraviolet (UV) lesions, R-loops and G-quadruplexes, to allow DNA replication to continue. Can also realign primers ahead of 'unreadable lesions' such as abasic sites and 6-4 photoproduct (6-4 pyrimidine-pyrimidinone), thereby skipping the lesion. Repriming avoids fork degradation while leading to accumulation of internal ssDNA gaps behind the forks. Also able to incorporate nucleotides opposite DNA lesions such as 8oxoG, like a regular translesion synthesis DNA polymerase. Also required for reinitiating stalled forks after UV damage during nuclear DNA replication. Required for mitochondrial DNA (mtDNA) synthesis and replication, by reinitiating synthesis after UV damage or in the presence of chain-terminating nucleotides. Prevents APOBEC family-mediated DNA mutagenesis by repriming downstream of abasic site to prohibit error-prone translesion synthesis. Has non-overlapping function with POLH. In addition to its role in DNA damage response, also required to maintain efficient nuclear and mitochondrial DNA replication in unperturbed cells. The chain is DNA-directed primase/polymerase protein from Mus musculus (Mouse).